Consider the following 355-residue polypeptide: UDP-N-acetylglucosamine--N-acetylmuramyl-(pentapeptide) pyrophosphoryl-undecaprenol N-acetylglucosamine transferase (355 aa).

Positions 166, 196, and 290 each coordinate UDP-N-acetyl-alpha-D-glucosamine.

Belongs to the glycosyltransferase 28 family. MurG subfamily.

Its subcellular location is the cell membrane. It catalyses the reaction Mur2Ac(oyl-L-Ala-gamma-D-Glu-L-Lys-D-Ala-D-Ala)-di-trans,octa-cis-undecaprenyl diphosphate + UDP-N-acetyl-alpha-D-glucosamine = beta-D-GlcNAc-(1-&gt;4)-Mur2Ac(oyl-L-Ala-gamma-D-Glu-L-Lys-D-Ala-D-Ala)-di-trans,octa-cis-undecaprenyl diphosphate + UDP + H(+). It participates in cell wall biogenesis; peptidoglycan biosynthesis. In terms of biological role, cell wall formation. Catalyzes the transfer of a GlcNAc subunit on undecaprenyl-pyrophosphoryl-MurNAc-pentapeptide (lipid intermediate I) to form undecaprenyl-pyrophosphoryl-MurNAc-(pentapeptide)GlcNAc (lipid intermediate II). The protein is UDP-N-acetylglucosamine--N-acetylmuramyl-(pentapeptide) pyrophosphoryl-undecaprenol N-acetylglucosamine transferase of Staphylococcus haemolyticus (strain JCSC1435).